The following is a 510-amino-acid chain: Bifunctional purine biosynthesis protein PurH (510 aa).

The region spanning 1 to 142 (MRALLSVSDK…KNYKDVMVLC (142 aa)) is the MGS-like domain.

The protein belongs to the PurH family.

It carries out the reaction (6R)-10-formyltetrahydrofolate + 5-amino-1-(5-phospho-beta-D-ribosyl)imidazole-4-carboxamide = 5-formamido-1-(5-phospho-D-ribosyl)imidazole-4-carboxamide + (6S)-5,6,7,8-tetrahydrofolate. The catalysed reaction is IMP + H2O = 5-formamido-1-(5-phospho-D-ribosyl)imidazole-4-carboxamide. Its pathway is purine metabolism; IMP biosynthesis via de novo pathway; 5-formamido-1-(5-phospho-D-ribosyl)imidazole-4-carboxamide from 5-amino-1-(5-phospho-D-ribosyl)imidazole-4-carboxamide (10-formyl THF route): step 1/1. It functions in the pathway purine metabolism; IMP biosynthesis via de novo pathway; IMP from 5-formamido-1-(5-phospho-D-ribosyl)imidazole-4-carboxamide: step 1/1. In Campylobacter jejuni subsp. doylei (strain ATCC BAA-1458 / RM4099 / 269.97), this protein is Bifunctional purine biosynthesis protein PurH.